The primary structure comprises 210 residues: Pyridoxine/pyridoxamine 5'-phosphate oxidase (210 aa).

Residues 7–10 (REDY) and lysine 65 each bind substrate. FMN-binding positions include 60–65 (RMVLLK), 75–76 (FT), arginine 81, lysine 82, and glutamine 104. Tyrosine 122, arginine 126, and serine 130 together coordinate substrate. FMN is bound by residues 139–140 (QS) and tryptophan 183. 189–191 (RLH) contacts substrate. Arginine 193 serves as a coordination point for FMN.

The protein belongs to the pyridoxamine 5'-phosphate oxidase family. Homodimer. FMN serves as cofactor.

The enzyme catalyses pyridoxamine 5'-phosphate + O2 + H2O = pyridoxal 5'-phosphate + H2O2 + NH4(+). It catalyses the reaction pyridoxine 5'-phosphate + O2 = pyridoxal 5'-phosphate + H2O2. The protein operates within cofactor metabolism; pyridoxal 5'-phosphate salvage; pyridoxal 5'-phosphate from pyridoxamine 5'-phosphate: step 1/1. It participates in cofactor metabolism; pyridoxal 5'-phosphate salvage; pyridoxal 5'-phosphate from pyridoxine 5'-phosphate: step 1/1. Functionally, catalyzes the oxidation of either pyridoxine 5'-phosphate (PNP) or pyridoxamine 5'-phosphate (PMP) into pyridoxal 5'-phosphate (PLP). This Neisseria meningitidis serogroup B (strain ATCC BAA-335 / MC58) protein is Pyridoxine/pyridoxamine 5'-phosphate oxidase.